The chain runs to 70 residues: Large ribosomal subunit protein bL28 (70 aa).

This sequence belongs to the bacterial ribosomal protein bL28 family.

The protein is Large ribosomal subunit protein bL28 of Thermosipho melanesiensis (strain DSM 12029 / CIP 104789 / BI429).